The chain runs to 457 residues: Cysteine--tRNA ligase (457 aa).

Cysteine 28 contributes to the Zn(2+) binding site. Residues 30–40 (MTVYDYCHLGH) carry the 'HIGH' region motif. Positions 209, 234, and 238 each coordinate Zn(2+). Positions 266–270 (KMSKS) match the 'KMSKS' region motif. An ATP-binding site is contributed by lysine 269.

It belongs to the class-I aminoacyl-tRNA synthetase family. In terms of assembly, monomer. Requires Zn(2+) as cofactor.

Its subcellular location is the cytoplasm. The enzyme catalyses tRNA(Cys) + L-cysteine + ATP = L-cysteinyl-tRNA(Cys) + AMP + diphosphate. The chain is Cysteine--tRNA ligase from Laribacter hongkongensis (strain HLHK9).